The sequence spans 354 residues: Molybdenum import ATP-binding protein ModC (354 aa).

Residues 1–229 (MLELDFEQQL…SALRLWLQKE (229 aa)) form the ABC transporter domain. 31 to 38 (GLSGAGKT) is an ATP binding site. The Mop domain occupies 289–354 (GSSIRNILAV…IKSVSFHRQL (66 aa)).

Belongs to the ABC transporter superfamily. Molybdate importer (TC 3.A.1.8) family. In terms of assembly, the complex is composed of two ATP-binding proteins (ModC), two transmembrane proteins (ModB) and a solute-binding protein (ModA).

The protein localises to the cell inner membrane. The catalysed reaction is molybdate(out) + ATP + H2O = molybdate(in) + ADP + phosphate + H(+). Functionally, part of the ABC transporter complex ModABC involved in molybdenum import. Responsible for energy coupling to the transport system. In Photorhabdus laumondii subsp. laumondii (strain DSM 15139 / CIP 105565 / TT01) (Photorhabdus luminescens subsp. laumondii), this protein is Molybdenum import ATP-binding protein ModC.